The following is a 579-amino-acid chain: Protein downstream neighbor of son homolog (579 aa).

Disordered stretches follow at residues 1 to 68 (MAEL…RRNP) and 331 to 379 (FSQP…DESF). Residues 339–348 (DTGKKQKKPE) are compositionally biased toward basic and acidic residues. The span at 365-378 (EADEASDESDEDES) shows a compositional bias: acidic residues.

It belongs to the DONSON family. As to quaternary structure, component of the replisome complex.

It is found in the nucleus. Functionally, replisome component that maintains genome stability by protecting stalled or damaged replication forks. After the induction of replication stress, required for the stabilization of stalled replication forks, the efficient activation of the intra-S-phase and G/2M cell-cycle checkpoints and the maintenance of genome stability. This Xenopus laevis (African clawed frog) protein is Protein downstream neighbor of son homolog.